The following is a 261-amino-acid chain: Methyl-coenzyme M reductase subunit gamma (261 aa).

Coenzyme M is bound at residue R123.

The protein belongs to the methyl-coenzyme M reductase gamma subunit family. In terms of assembly, MCR is a hexamer of two alpha, two beta, and two gamma chains, forming a dimer of heterotrimers. It depends on coenzyme F430 as a cofactor.

It localises to the cytoplasm. The catalysed reaction is coenzyme B + methyl-coenzyme M = methane + coenzyme M-coenzyme B heterodisulfide. Its pathway is one-carbon metabolism; methyl-coenzyme M reduction; methane from methyl-coenzyme M: step 1/1. In terms of biological role, component of the methyl-coenzyme M reductase (MCR) I that catalyzes the reductive cleavage of methyl-coenzyme M (CoM-S-CH3 or 2-(methylthio)ethanesulfonate) using coenzyme B (CoB or 7-mercaptoheptanoylthreonine phosphate) as reductant which results in the production of methane and the mixed heterodisulfide of CoB and CoM (CoM-S-S-CoB). This is the final step in methanogenesis. The sequence is that of Methyl-coenzyme M reductase subunit gamma (mcrG) from Methanococcus voltae.